The primary structure comprises 170 residues: Thialysine N-epsilon-acetyltransferase (170 aa).

The N-acetyltransferase domain maps to 4–168 (VRIREAKEGD…FQGEATRKLA (165 aa)). A substrate-binding site is contributed by 27 to 28 (FE). Residue Lys29 is modified to N6-acetyllysine. Residue Glu92 participates in substrate binding. Residues 94–96 (IYV), 102–107 (GQGIGS), 133–135 (NQR), and Tyr140 each bind acetyl-CoA. Tyr140 acts as the Proton donor in catalysis. A substrate-binding site is contributed by Glu152.

The protein belongs to the acetyltransferase family. As to quaternary structure, homodimer. In terms of tissue distribution, widely expressed. Under physiological conditions, SSAT2 is expressed at lower level that SSAT1 (SSAT). Many tissues express only SSAT1, several tissues express both SSAT1 and SSAT2, and bone, cervix, ovary and pineal gland expressed only SSAT2.

The protein resides in the cytoplasm. The catalysed reaction is S-(2-aminoethyl)-L-cysteine + acetyl-CoA = S-(2-acetamidoethyl)-L-cysteine + CoA + H(+). It catalyses the reaction an alkane-alpha,omega-diamine + acetyl-CoA = an N-acetylalkane-alpha,omega-diamine + CoA + H(+). Catalyzes the N-acetylation of the amino acid thialysine (S-(2-aminoethyl)-L-cysteine), a L-lysine analog with the 4-methylene group substituted with a sulfur. May also catalyze acetylation of polyamines, such as norspermidine, spermidine or spermine. However, ability to acetylate polyamines is weak, suggesting that it does not act as a diamine acetyltransferase in vivo. The chain is Thialysine N-epsilon-acetyltransferase from Homo sapiens (Human).